Here is a 171-residue protein sequence, read N- to C-terminus: 3-hydroxydecanoyl-[acyl-carrier-protein] dehydratase (171 aa).

Residue H70 is part of the active site.

It belongs to the thioester dehydratase family. FabA subfamily. Homodimer.

The protein localises to the cytoplasm. The enzyme catalyses a (3R)-hydroxyacyl-[ACP] = a (2E)-enoyl-[ACP] + H2O. It catalyses the reaction (3R)-hydroxydecanoyl-[ACP] = (2E)-decenoyl-[ACP] + H2O. The catalysed reaction is (2E)-decenoyl-[ACP] = (3Z)-decenoyl-[ACP]. The protein operates within lipid metabolism; fatty acid biosynthesis. In terms of biological role, necessary for the introduction of cis unsaturation into fatty acids. Catalyzes the dehydration of (3R)-3-hydroxydecanoyl-ACP to E-(2)-decenoyl-ACP and then its isomerization to Z-(3)-decenoyl-ACP. Can catalyze the dehydratase reaction for beta-hydroxyacyl-ACPs with saturated chain lengths up to 16:0, being most active on intermediate chain length. In Shewanella baltica (strain OS223), this protein is 3-hydroxydecanoyl-[acyl-carrier-protein] dehydratase.